Reading from the N-terminus, the 431-residue chain is Serine/threonine-protein kinase Sgk1 (431 aa).

Positions 1-60 (MTVKTEAAKGTLTYSRMRGMVAILIAFMKQRRMGLNDFIQKIANNSYACKHPEVQSILKI) are necessary for localization to the mitochondria. The disordered stretch occupies residues 66–92 (PELMNANPSPPPSPSQQINLGPSSNPH). Serine 74 bears the Phosphoserine mark. Serine 78 is subject to Phosphoserine; by MAPK7. The segment covering 81–91 (QQINLGPSSNP) has biased composition (polar residues). One can recognise a Protein kinase domain in the interval 98–355 (FHFLKVIGKG…FMEIKSHVFF (258 aa)). ATP-binding positions include 104 to 112 (IGKGSFGKV) and lysine 127. The Nuclear localization signal signature appears at 131-141 (KKAILKKKEEK). Aspartate 222 functions as the Proton acceptor in the catalytic mechanism. Threonine 256 is subject to Phosphothreonine; by PDPK1. Positions 356–431 (SLINWDDLIN…SYAPPTDSFL (76 aa)) constitute an AGC-kinase C-terminal domain. Threonine 369 is modified (phosphothreonine; by PKA). Residues serine 397, serine 401, and serine 422 each carry the phosphoserine modification.

This sequence belongs to the protein kinase superfamily. AGC Ser/Thr protein kinase family. In terms of assembly, homodimer; disulfide-linked. Forms a trimeric complex with FBXW7 and NOTCH1. Interacts with MAPK3/ERK1, MAPK1/ERK2, MAP2K1/MEK1, MAP2K2/MEK2, NEDD4, NEDD4L, MAPT/TAU, MAPK7, CREB1, SLC9A3R2/NHERF2 and KCNJ1/ROMK1. Associates with the mammalian target of rapamycin complex 2 (mTORC2) via an interaction with MAPKAP1/SIN1. Post-translationally, regulated by phosphorylation. Activated by phosphorylation on Ser-422 by mTORC2, transforming it into a substrate for PDPK1 which phosphorylates it on Thr-256. Phosphorylation on Ser-397 and Ser-401 are also essential for its activity. Phosphorylation on Ser-78 by MAPK7 is required for growth factor-induced cell cycle progression. Ubiquitinated by NEDD4L; which promotes proteasomal degradation. Ubiquitinated by SYVN1 at the endoplasmic reticulum; which promotes rapid proteasomal degradation and maintains a high turnover rate in resting cells.

It is found in the cytoplasm. It localises to the nucleus. Its subcellular location is the endoplasmic reticulum membrane. The protein localises to the cell membrane. The protein resides in the mitochondrion. It catalyses the reaction L-seryl-[protein] + ATP = O-phospho-L-seryl-[protein] + ADP + H(+). The catalysed reaction is L-threonyl-[protein] + ATP = O-phospho-L-threonyl-[protein] + ADP + H(+). Two specific sites, one in the kinase domain (Thr-256) and the other in the C-terminal regulatory region (Ser-422), need to be phosphorylated for its full activation. Phosphorylation at Ser-397 and Ser-401 are also essential for its activity. Activated by WNK1, WNK2, WNK3 and WNK4; which promote phosphorylation by mTORC2. In terms of biological role, serine/threonine-protein kinase which is involved in the regulation of a wide variety of ion channels, membrane transporters, cellular enzymes, transcription factors, neuronal excitability, cell growth, proliferation, survival, migration and apoptosis. Plays an important role in cellular stress response. Contributes to regulation of renal Na(+) retention, renal K(+) elimination, salt appetite, gastric acid secretion, intestinal Na(+)/H(+) exchange and nutrient transport, insulin-dependent salt sensitivity of blood pressure, salt sensitivity of peripheral glucose uptake, cardiac repolarization and memory consolidation. Up-regulates Na(+) channels: SCNN1A/ENAC, SCN5A and ASIC1/ACCN2, K(+) channels: KCNJ1/ROMK1, KCNA1-5, KCNQ1-5 and KCNE1, epithelial Ca(2+) channels: TRPV5 and TRPV6, chloride channels: BSND, CLCN2 and CFTR, glutamate transporters: SLC1A3/EAAT1, SLC1A2 /EAAT2, SLC1A1/EAAT3, SLC1A6/EAAT4 and SLC1A7/EAAT5, amino acid transporters: SLC1A5/ASCT2, SLC38A1/SN1 and SLC6A19, creatine transporter: SLC6A8, Na(+)/dicarboxylate cotransporter: SLC13A2/NADC1, Na(+)-dependent phosphate cotransporter: SLC34A2/NAPI-2B, glutamate receptor: GRIK2/GLUR6. Up-regulates carriers: SLC9A3/NHE3, SLC12A1/NKCC2, SLC12A3/NCC, SLC5A3/SMIT, SLC2A1/GLUT1, SLC5A1/SGLT1 and SLC15A2/PEPT2. Regulates enzymes: GSK3A/B, PMM2 and Na(+)/K(+) ATPase, and transcription factors: CTNNB1 and nuclear factor NF-kappa-B. Stimulates sodium transport into epithelial cells by enhancing the stability and expression of SCNN1A/ENAC. This is achieved by phosphorylating the NEDD4L ubiquitin E3 ligase, promoting its interaction with 14-3-3 proteins, thereby preventing it from binding to SCNN1A/ENAC and targeting it for degradation. Regulates store-operated Ca(+2) entry (SOCE) by stimulating ORAI1 and STIM1. Regulates KCNJ1/ROMK1 directly via its phosphorylation or indirectly via increased interaction with SLC9A3R2/NHERF2. Phosphorylates MDM2 and activates MDM2-dependent ubiquitination of p53/TP53. Phosphorylates MAPT/TAU and mediates microtubule depolymerization and neurite formation in hippocampal neurons. Phosphorylates SLC2A4/GLUT4 and up-regulates its activity. Phosphorylates APBB1/FE65 and promotes its localization to the nucleus. Phosphorylates MAPK1/ERK2 and activates it by enhancing its interaction with MAP2K1/MEK1 and MAP2K2/MEK2. Phosphorylates FBXW7 and plays an inhibitory role in the NOTCH1 signaling. Phosphorylates FOXO1 resulting in its relocalization from the nucleus to the cytoplasm. Phosphorylates FOXO3, promoting its exit from the nucleus and interference with FOXO3-dependent transcription. Phosphorylates BRAF and MAP3K3/MEKK3 and inhibits their activity. Phosphorylates SLC9A3/NHE3 in response to dexamethasone, resulting in its activation and increased localization at the cell membrane. Phosphorylates CREB1. Necessary for vascular remodeling during angiogenesis. In Macaca fascicularis (Crab-eating macaque), this protein is Serine/threonine-protein kinase Sgk1 (SGK1).